Reading from the N-terminus, the 154-residue chain is Transcriptional repressor NrdR (154 aa).

The segment at 3–34 (CPFCGAHDTKVIDSRLVAEGDQVRRRRECLAC) is a zinc-finger region. The ATP-cone domain occupies 49 to 139 (PRLIKQDGSR…VYRRFQDLNE (91 aa)).

The protein belongs to the NrdR family. Zn(2+) serves as cofactor.

In terms of biological role, negatively regulates transcription of bacterial ribonucleotide reductase nrd genes and operons by binding to NrdR-boxes. The sequence is that of Transcriptional repressor NrdR from Pseudomonas aeruginosa (strain LESB58).